Here is a 218-residue protein sequence, read N- to C-terminus: Adenylate kinase (218 aa).

Position 12–17 (12–17) interacts with ATP; that stretch reads GAGKGT. The segment at 32-61 is NMP; the sequence is STGDMLREARSSGTEMGKRVAEVMDRGELV. AMP contacts are provided by residues T33, R38, 59-61, 85-88, and Q92; these read ELV and GFPR. Residues 126–164 are LID; sequence GRFTCGNCGEVYHDVTKPTKEPGKCDVCGSTDLRRRADD. R127 lines the ATP pocket. 2 residues coordinate Zn(2+): C130 and C133. 136–137 contributes to the ATP binding site; sequence VY. The Zn(2+) site is built by C150 and C153. The AMP site is built by R161 and R172. ATP is bound at residue A200.

This sequence belongs to the adenylate kinase family. As to quaternary structure, monomer.

Its subcellular location is the cytoplasm. The catalysed reaction is AMP + ATP = 2 ADP. The protein operates within purine metabolism; AMP biosynthesis via salvage pathway; AMP from ADP: step 1/1. In terms of biological role, catalyzes the reversible transfer of the terminal phosphate group between ATP and AMP. Plays an important role in cellular energy homeostasis and in adenine nucleotide metabolism. This chain is Adenylate kinase, found in Paracoccus denitrificans (strain Pd 1222).